The primary structure comprises 58 residues: uncharacterized protein (58 aa).

This is an uncharacterized protein from Archaeoglobus fulgidus (strain ATCC 49558 / DSM 4304 / JCM 9628 / NBRC 100126 / VC-16).